The sequence spans 227 residues: MTQERSPSDGTPLIQPADIADIRREYTRGGLRRGDLPANPLDLFERWLKQACEAKLADPTAMSVATVDERGQPYQRIVLLKHYDEKGMVFYTNMGSRKAHHLENNPRISLLFPWHVLERQVMVLGRVEKLPALEVLKYFHSRPKDSQIGAWVSKQSSRISARGVLESKFLELKQKFQNGEVPLPSFWGGFRVVIDSVEFWQGGEHRLHDRFFYQRQEENWQIDRLAP.

Substrate is bound by residues R23 to Y26 and K81. Residues R76–K81, Y91–T92, R97, K98, and Q120 contribute to the FMN site. Residues Y138, R142, and S146 each contribute to the substrate site. Residues Q155–S156 and W200 contribute to the FMN site. R206–H208 provides a ligand contact to substrate. R210 contributes to the FMN binding site.

This sequence belongs to the pyridoxamine 5'-phosphate oxidase family. Homodimer. Requires FMN as cofactor.

It carries out the reaction pyridoxamine 5'-phosphate + O2 + H2O = pyridoxal 5'-phosphate + H2O2 + NH4(+). The catalysed reaction is pyridoxine 5'-phosphate + O2 = pyridoxal 5'-phosphate + H2O2. It participates in cofactor metabolism; pyridoxal 5'-phosphate salvage; pyridoxal 5'-phosphate from pyridoxamine 5'-phosphate: step 1/1. The protein operates within cofactor metabolism; pyridoxal 5'-phosphate salvage; pyridoxal 5'-phosphate from pyridoxine 5'-phosphate: step 1/1. Functionally, catalyzes the oxidation of either pyridoxine 5'-phosphate (PNP) or pyridoxamine 5'-phosphate (PMP) into pyridoxal 5'-phosphate (PLP). This is Pyridoxine/pyridoxamine 5'-phosphate oxidase from Pectobacterium atrosepticum (strain SCRI 1043 / ATCC BAA-672) (Erwinia carotovora subsp. atroseptica).